A 702-amino-acid polypeptide reads, in one-letter code: Elongation factor G (702 aa).

The 283-residue stretch at 8-290 folds into the tr-type G domain; sequence SRYRNIGISA…AVIEYLPSPT (283 aa). Residues 17-24, 88-92, and 142-145 contribute to the GTP site; these read AHIDAGKT, DTPGH, and NKMD.

The protein belongs to the TRAFAC class translation factor GTPase superfamily. Classic translation factor GTPase family. EF-G/EF-2 subfamily.

Its subcellular location is the cytoplasm. In terms of biological role, catalyzes the GTP-dependent ribosomal translocation step during translation elongation. During this step, the ribosome changes from the pre-translocational (PRE) to the post-translocational (POST) state as the newly formed A-site-bound peptidyl-tRNA and P-site-bound deacylated tRNA move to the P and E sites, respectively. Catalyzes the coordinated movement of the two tRNA molecules, the mRNA and conformational changes in the ribosome. The chain is Elongation factor G from Edwardsiella ictaluri (strain 93-146).